The following is a 924-amino-acid chain: Probable dipeptidyl-aminopeptidase B (924 aa).

Residues 1-104 (MPPFTYSDDT…DQRSPGDGQR (104 aa)) form a disordered region. Residues 1–111 (MPPFTYSDDT…GQRMDRSLRR (111 aa)) lie on the Cytoplasmic side of the membrane. Over residues 9–23 (DTLRSGRDRFRDHSP) the composition is skewed to basic and acidic residues. Residues 31 to 43 (SQETDSSASTTSI) show a composition bias toward polar residues. Composition is skewed to basic and acidic residues over residues 47 to 58 (RIQERLDTKEFT) and 92 to 104 (SRSD…DGQR). A helical; Signal-anchor for type II membrane protein membrane pass occupies residues 112 to 132 (WLFIVSGVLVATWVIGLFVFV). Residues 133 to 924 (SSKAYKPSSS…GMKKRAAPTA (792 aa)) are Vacuolar-facing. N-linked (GlcNAc...) asparagine glycans are attached at residues Asn231 and Asn364. The active-site Charge relay system is the Ser768. N-linked (GlcNAc...) asparagine glycosylation is present at Asn827. Residues Asp845 and His878 each act as charge relay system in the active site.

This sequence belongs to the peptidase S9B family.

The protein resides in the vacuole membrane. It catalyses the reaction Release of an N-terminal dipeptide, Xaa-Yaa-|-Zaa-, from a polypeptide, preferentially when Yaa is Pro, provided Zaa is neither Pro nor hydroxyproline.. Functionally, type IV dipeptidyl-peptidase which removes N-terminal dipeptides sequentially from polypeptides having unsubstituted N-termini provided that the penultimate residue is proline. This is Probable dipeptidyl-aminopeptidase B (DAPB) from Sordaria macrospora (strain ATCC MYA-333 / DSM 997 / K(L3346) / K-hell).